The following is a 470-amino-acid chain: MNPNQKIITIGSISIAIGIISLILQIGNIISIWASHSIQTGSQNHTGICNQRIITYENSTWVNQTYVNINNTNVVAGKDKTSMTLAGNSSLCPIRGWAIYTKDNSIRIGSKGDVFVIREPFISCSHLECRTFFLTQGALLNDKHSNGTVKDRSPYRALMSCPLGEAPSPYNSRFESVAWSASACHDGLGWLTIGISGPDNGAVAVLKYNGIITETIKSWKKRILRTQESECVCMNGSCFTIMTDGPSNGAASYRIFKIEKGRVTKSIELDAPNYHYEECSCYPDTGTVMCVCRDNWHGSNRPWVSFNQNLDYQIGYICSGVFGDNPRPKDGEGSCNPVTVDGADGVKGFSYRYGNGVWIGRTKSNRLRKGFEMIWDPNGWTDTDSDFSMKQDIVAMTDWSGYSGSFVQHPELTGLDCMRPCFWVELVRGLPRENTTIWTSGSSISFCGVNSDTANWSWPDGAELPFTIDK.

The Intravirion portion of the chain corresponds to 1 to 6 (MNPNQK). The chain crosses the membrane as a helical span at residues 7–27 (IITIGSISIAIGIISLILQIG). Residues 11–33 (GSISIAIGIISLILQIGNIISIW) are involved in apical transport and lipid raft association. At 28–470 (NIISIWASHS…GAELPFTIDK (443 aa)) the chain is on the virion surface side. Positions 36–90 (HSIQTGSQNHTGICNQRIITYENSTWVNQTYVNINNTNVVAGKDKTSMTLAGNSS) are hypervariable stalk region. N-linked (GlcNAc...) asparagine; by host glycans are attached at residues asparagine 44, asparagine 58, asparagine 63, asparagine 70, and asparagine 88. The segment at 91-470 (LCPIRGWAIY…GAELPFTIDK (380 aa)) is head of neuraminidase. 8 cysteine pairs are disulfide-bonded: cysteine 92–cysteine 417, cysteine 124–cysteine 129, cysteine 184–cysteine 231, cysteine 233–cysteine 238, cysteine 279–cysteine 292, cysteine 281–cysteine 290, cysteine 318–cysteine 335, and cysteine 421–cysteine 447. Position 118 (arginine 118) interacts with substrate. The N-linked (GlcNAc...) asparagine; by host glycan is linked to asparagine 146. Aspartate 151 functions as the Proton donor/acceptor in the catalytic mechanism. Arginine 152 serves as a coordination point for substrate. Asparagine 235 carries N-linked (GlcNAc...) asparagine; by host glycosylation. 277 to 278 (EE) lines the substrate pocket. Arginine 293 lines the substrate pocket. The Ca(2+) site is built by aspartate 294, glycine 298, and aspartate 324. A substrate-binding site is contributed by arginine 368. Catalysis depends on tyrosine 402, which acts as the Nucleophile. Residues asparagine 434 and asparagine 455 are each glycosylated (N-linked (GlcNAc...) asparagine; by host).

The protein belongs to the glycosyl hydrolase 34 family. In terms of assembly, homotetramer. The cofactor is Ca(2+). Post-translationally, N-glycosylated.

It localises to the virion membrane. Its subcellular location is the host apical cell membrane. The enzyme catalyses Hydrolysis of alpha-(2-&gt;3)-, alpha-(2-&gt;6)-, alpha-(2-&gt;8)- glycosidic linkages of terminal sialic acid residues in oligosaccharides, glycoproteins, glycolipids, colominic acid and synthetic substrates.. Inhibited by the neuraminidase inhibitors zanamivir (Relenza) and oseltamivir (Tamiflu). These drugs interfere with the release of progeny virus from infected cells and are effective against all influenza strains. Resistance to neuraminidase inhibitors is quite rare. In terms of biological role, catalyzes the removal of terminal sialic acid residues from viral and cellular glycoconjugates. Cleaves off the terminal sialic acids on the glycosylated HA during virus budding to facilitate virus release. Additionally helps virus spread through the circulation by further removing sialic acids from the cell surface. These cleavages prevent self-aggregation and ensure the efficient spread of the progeny virus from cell to cell. Otherwise, infection would be limited to one round of replication. Described as a receptor-destroying enzyme because it cleaves a terminal sialic acid from the cellular receptors. May facilitate viral invasion of the upper airways by cleaving the sialic acid moieties on the mucin of the airway epithelial cells. Likely to plays a role in the budding process through its association with lipid rafts during intracellular transport. May additionally display a raft-association independent effect on budding. Plays a role in the determination of host range restriction on replication and virulence. Sialidase activity in late endosome/lysosome traffic seems to enhance virus replication. The sequence is that of Neuraminidase from Influenza A virus (strain A/USA:Memphis/10/1996 H1N1).